A 376-amino-acid chain; its full sequence is MNYNSINLVKTHLMNYPCPLNINFLWNYGFLLGIIFFIQILTGVFLASRYSPEISYAYYSIQHILRELWSGWCFRYMHATGASLVFFLTYLHILRGLNYSYLYLPLSWISGLIIFALFIVTAFIGYVLPWGQMSYWGATVITNLLSGIPALVIWLCGGYTVSDPTIKRFFVLHFILPFVALCIVFIHIFFLHLHGSTNPLGYDTALKIPFYPNLLSLDVKGFNNILILFLIQSIFGVIPLSHPDNAIIVNTYVTPLQIVPEWYFLPFYAMLKTIPSKNAGLVIVVASLQLLFLLAEQRNLTTIIQFKMVFSAREYSVPIIWFMCSFYALLWIGCQLPQDIFILYGRLFIILFFSSGLFALVHYKRTHYDYSSQANI.

4 helical membrane passes run 28-48 (YGFLLGIIFFIQILTGVFLAS), 72-94 (WCFRYMHATGASLVFFLTYLHIL), 107-127 (SWISGLIIFALFIVTAFIGYV), and 169-189 (FFVLHFILPFVALCIVFIHIF). 2 residues coordinate heme b: His-78 and His-92. The heme b site is built by His-173 and His-187. His-192 contacts a ubiquinone. Helical transmembrane passes span 214–234 (LLSLDVKGFNNILILFLIQSI), 274–294 (IPSKNAGLVIVVASLQLLFLL), 317–337 (VPIIWFMCSFYALLWIGCQLP), and 340–360 (IFILYGRLFIILFFSSGLFAL).

It belongs to the cytochrome b family. As to quaternary structure, the main subunits of complex b-c1 are: cytochrome b, cytochrome c1 and the Rieske protein. It depends on heme b as a cofactor.

It localises to the mitochondrion inner membrane. Its function is as follows. Component of the ubiquinol-cytochrome c reductase complex (complex III or cytochrome b-c1 complex) that is part of the mitochondrial respiratory chain. The b-c1 complex mediates electron transfer from ubiquinol to cytochrome c. Contributes to the generation of a proton gradient across the mitochondrial membrane that is then used for ATP synthesis. In Plasmodium chabaudi, this protein is Cytochrome b (MT-CYB).